A 106-amino-acid polypeptide reads, in one-letter code: Small ribosomal subunit protein bS18 (106 aa).

The tract at residues 1–32 is disordered; the sequence is MRWMKIMSEDMKQEQSGEGRGGRGGPARPLAS. Basic and acidic residues predominate over residues 7 to 21; it reads MSEDMKQEQSGEGRG.

It belongs to the bacterial ribosomal protein bS18 family. Part of the 30S ribosomal subunit. Forms a tight heterodimer with protein bS6.

Its function is as follows. Binds as a heterodimer with protein bS6 to the central domain of the 16S rRNA, where it helps stabilize the platform of the 30S subunit. This is Small ribosomal subunit protein bS18 from Magnetococcus marinus (strain ATCC BAA-1437 / JCM 17883 / MC-1).